The following is a 437-amino-acid chain: Zinc finger protein 491 (437 aa).

Residues 35 to 59 form a C2H2-type 1; degenerate zinc finger; sequence KSCESGTCGEIFMGYSSFNRNIRTD. Residues 103-125 form a C2H2-type 2; degenerate zinc finger; the sequence is FDCKECEKSFISPASIRRYMVTH. 11 consecutive C2H2-type zinc fingers follow at residues 131–153, 159–181, 187–209, 215–237, 243–265, 271–293, 299–321, 327–349, 355–377, 383–405, and 411–433; these read YKCK…ERTH, YECK…ERTH, YECK…MRMH, HKCK…ERSH, DGCK…GRTH, YECK…ERIH, and YQCK…ERTH.

Belongs to the krueppel C2H2-type zinc-finger protein family.

The protein localises to the nucleus. Functionally, may be involved in transcriptional regulation. This Homo sapiens (Human) protein is Zinc finger protein 491 (ZNF491).